Reading from the N-terminus, the 380-residue chain is Alcohol dehydrogenase 2 (380 aa).

Cys-48, Thr-50, His-70, Cys-100, Cys-103, Cys-106, Cys-114, and Cys-178 together coordinate Zn(2+). An alcohol contacts are provided by Thr-50 and His-70. Thr-50 lines the NAD(+) pocket. NAD(+)-binding positions include 203-208, Asp-227, Arg-232, Thr-273, Val-296, 296-298, Phe-323, and Arg-373; these read GLGAVG and VGV.

The protein belongs to the zinc-containing alcohol dehydrogenase family. In terms of assembly, homodimer. Homotetramer. Zn(2+) serves as cofactor.

It is found in the cytoplasm. It carries out the reaction a primary alcohol + NAD(+) = an aldehyde + NADH + H(+). The enzyme catalyses a secondary alcohol + NAD(+) = a ketone + NADH + H(+). The sequence is that of Alcohol dehydrogenase 2 (ADH2) from Solanum tuberosum (Potato).